Here is a 105-residue protein sequence, read N- to C-terminus: Immunoglobulin lambda-like polypeptide 1 (105 aa).

A c region region spans residues 1-105; the sequence is QPKSDPLVTL…EKSVSPAECS (105 aa). In terms of domain architecture, Ig-like C1-type spans 6-100; that stretch reads PLVTLFLPSL…EGNTVEKSVS (95 aa). The cysteines at positions 27 and 86 are disulfide-linked.

Associates non-covalently with VPREB1A. Interacts with SYNV1/HRD1 (via N-terminus); this interaction leads to increased IGLL1 ubiquitination and degradation in pre-B cells, possibly through a lysosomal, not proteasomal, pathway.

It localises to the endoplasmic reticulum. Its subcellular location is the secreted. Critical for B-cell development. The protein is Immunoglobulin lambda-like polypeptide 1 (Igll1) of Mus spretus (Western Mediterranean mouse).